The primary structure comprises 471 residues: Putative F-box protein At5g36200 (471 aa).

An F-box domain is found at 1–46 (MAMSDLPNDLVEEIISRVPVKSIRAVSSTCKNWNTLSNDHSFTRKL).

This is Putative F-box protein At5g36200 from Arabidopsis thaliana (Mouse-ear cress).